A 579-amino-acid chain; its full sequence is uncharacterized protein (579 aa).

The tract at residues 1–100 (MSGRRRNHPG…APPCGPYPGE (100 aa)) is disordered. The span at 80-90 (GQQQSEPQHNS) shows a compositional bias: polar residues. 11 consecutive transmembrane segments (helical) span residues 148–168 (FAVD…AAAS), 175–195 (VALY…LIGP), 206–226 (VALA…IMNY), 228–248 (GATG…MMVL), 279–299 (VFGL…VEFV), 303–323 (LFKL…GALL), 378–398 (LWGN…PAFV), 407–427 (WVQL…NFAG), 448–468 (IAVT…MTTI), 504–524 (SEST…MVYT), and 526–546 (LWVG…QTVV).

It to M.tuberculosis Rv0876c.

It localises to the cell membrane. This is an uncharacterized protein from Mycobacterium leprae (strain TN).